The chain runs to 172 residues: Translationally-controlled tumor protein homolog (172 aa).

Residues 1–172 enclose the TCTP domain; sequence MIIYKDTVTE…FKDGLISEKC (172 aa).

It belongs to the TCTP family.

It is found in the cytoplasm. Involved in calcium binding and microtubule stabilization. This is Translationally-controlled tumor protein homolog (tpt1) from Xenopus tropicalis (Western clawed frog).